A 359-amino-acid chain; its full sequence is S-adenosylmethionine:tRNA ribosyltransferase-isomerase (359 aa).

Belongs to the QueA family. Monomer.

Its subcellular location is the cytoplasm. It carries out the reaction 7-aminomethyl-7-carbaguanosine(34) in tRNA + S-adenosyl-L-methionine = epoxyqueuosine(34) in tRNA + adenine + L-methionine + 2 H(+). Its pathway is tRNA modification; tRNA-queuosine biosynthesis. Its function is as follows. Transfers and isomerizes the ribose moiety from AdoMet to the 7-aminomethyl group of 7-deazaguanine (preQ1-tRNA) to give epoxyqueuosine (oQ-tRNA). This chain is S-adenosylmethionine:tRNA ribosyltransferase-isomerase, found in Synechococcus elongatus (strain ATCC 33912 / PCC 7942 / FACHB-805) (Anacystis nidulans R2).